We begin with the raw amino-acid sequence, 99 residues long: uncharacterized protein (99 aa).

This is an uncharacterized protein from Acidianus bottle-shaped virus (isolate Italy/Pozzuoli) (ABV).